The following is a 485-amino-acid chain: Serine/threonine-protein kinase 4 (485 aa).

The Protein kinase domain occupies Phe-30–Ile-281. Residues Leu-36–Val-44 and Lys-59 each bind ATP. The active-site Proton acceptor is Asp-149. Residue Thr-183 is modified to Phosphothreonine; by autocatalysis. Positions Glu-287 to Glu-313 form a coiled coil. The SARAH domain occupies Tyr-431–Lys-478.

Belongs to the protein kinase superfamily. STE Ser/Thr protein kinase family. STE20 subfamily. As to quaternary structure, homodimer; mediated via the coiled-coil region. It depends on Mg(2+) as a cofactor. In terms of processing, autophosphorylated on Thr-183. Proteolytically cleaved by caspase-3 during apoptosis at Asp-326 resulting in a 37 kDa form. Proteolytic cleavage results in kinase activation and nuclear translocation of the truncated form (MST1/N).

The protein resides in the cytoplasm. The protein localises to the nucleus. The catalysed reaction is L-seryl-[protein] + ATP = O-phospho-L-seryl-[protein] + ADP + H(+). It carries out the reaction L-threonyl-[protein] + ATP = O-phospho-L-threonyl-[protein] + ADP + H(+). With respect to regulation, the C-terminal non-catalytic region inhibits the kinase activity, the enzyme is activated by caspase-cleavage. Homodimerization and autophosphorylation of Thr-183 is also required for full activation. Stress-activated, pro-apoptotic kinase which, following caspase-cleavage, enters the nucleus and induces chromatin condensation followed by internucleosomal DNA fragmentation. Key component of the Hippo signaling pathway which plays a pivotal role in organ size control and tumor suppression by restricting proliferation and promoting apoptosis. The core of this pathway is composed of a kinase cascade wherein stk3/mst2 and stk4/mst1, in complex with its regulatory protein sav1, phosphorylates and activates lats1/2 in complex with its regulatory protein mob1, which in turn phosphorylates and inactivates yap1 oncoprotein and wwtr1/taz. Phosphorylation of yap1 by lats2 inhibits its translocation into the nucleus to regulate cellular genes important for cell proliferation, cell death, and cell migration. Phosphorylates 'Ser-14' of histone H2B (H2BS14ph) during apoptosis. In Xenopus tropicalis (Western clawed frog), this protein is Serine/threonine-protein kinase 4 (stk4).